We begin with the raw amino-acid sequence, 552 residues long: Dihydroxy-acid dehydratase (552 aa).

Asp-78 serves as a coordination point for Mg(2+). Residue Cys-119 participates in [2Fe-2S] cluster binding. Asp-120 and Lys-121 together coordinate Mg(2+). Position 121 is an N6-carboxylysine (Lys-121). Cys-191 is a binding site for [2Fe-2S] cluster. Residue Glu-442 participates in Mg(2+) binding. The Proton acceptor role is filled by Ser-468.

It belongs to the IlvD/Edd family. In terms of assembly, homodimer. It depends on [2Fe-2S] cluster as a cofactor. Requires Mg(2+) as cofactor.

It carries out the reaction (2R)-2,3-dihydroxy-3-methylbutanoate = 3-methyl-2-oxobutanoate + H2O. The enzyme catalyses (2R,3R)-2,3-dihydroxy-3-methylpentanoate = (S)-3-methyl-2-oxopentanoate + H2O. The protein operates within amino-acid biosynthesis; L-isoleucine biosynthesis; L-isoleucine from 2-oxobutanoate: step 3/4. It participates in amino-acid biosynthesis; L-valine biosynthesis; L-valine from pyruvate: step 3/4. In terms of biological role, functions in the biosynthesis of branched-chain amino acids. Catalyzes the dehydration of (2R,3R)-2,3-dihydroxy-3-methylpentanoate (2,3-dihydroxy-3-methylvalerate) into 2-oxo-3-methylpentanoate (2-oxo-3-methylvalerate) and of (2R)-2,3-dihydroxy-3-methylbutanoate (2,3-dihydroxyisovalerate) into 2-oxo-3-methylbutanoate (2-oxoisovalerate), the penultimate precursor to L-isoleucine and L-valine, respectively. This Moorella thermoacetica (strain ATCC 39073 / JCM 9320) protein is Dihydroxy-acid dehydratase.